Reading from the N-terminus, the 912-residue chain is WD repeat-containing protein 44 (912 aa).

The span at 1 to 14 (MASESDTEEFFDAP) shows a compositional bias: acidic residues. A disordered region spans residues 1-25 (MASESDTEEFFDAPEDVHLEGGDPI). A2 carries the N-acetylalanine modification. The tract at residues 2–170 (ASESDTEEFF…SSTAQLNVPE (169 aa)) is binding activity. A Phosphoserine modification is found at S3. Residues 9–15 (EFFDAPE) carry the FFAT-like motif motif. S50, S66, S71, S81, S96, and S126 each carry phosphoserine. 2 disordered regions span residues 79–104 (DDSL…GTEL) and 118–152 (QEDS…KPVD). Positions 89-104 (QSDQATASPVTAGTEL) are enriched in polar residues. Phosphothreonine is present on T158. Disordered regions lie at residues 183-202 (VKES…TKDF), 207-279 (EVAP…PKEN), 318-349 (QENG…ELTD), 396-422 (SNDA…RLKQ), and 457-479 (RDEV…MPYT). Residues 210–256 (PAKPPRQLTPEPDIVASTKKPVPARPPPPANFPPPRPPPPSRPAPPP) are important for interaction with ARHGAP26 AND ARHGAP10. T218 is subject to Phosphothreonine. The span at 232 to 255 (PARPPPPANFPPPRPPPPSRPAPP) shows a compositional bias: pro residues. A Phosphoserine modification is found at S261. A compositionally biased stretch (basic and acidic residues) spans 261-277 (SELEFEALKTPDLDVPK). T270 bears the Phosphothreonine mark. The segment at 333–346 (VMGPQRPRSNSGRE) is important for interaction with RAB11A. The segment at 334-504 (MGPQRPRSNS…DFDQIKVVQD (171 aa)) is interaction with RAB11. 2 positions are modified to phosphoserine: S341 and S343. T348 carries the post-translational modification Phosphothreonine. Phosphoserine occurs at positions 402, 469, 470, and 471. Over residues 466–475 (DDPSSSDDEG) the composition is skewed to acidic residues. The residue at position 478 (Y478) is a Phosphotyrosine. A WD 1 repeat occupies 508–547 (EHMGAVWTMKFSHCGRLLASAGQDNVVRIWALKNAFDYFN). The tract at residues 556–592 (EGRVSPSPSQESLNSSKSDTDTGVCSGTDEDPDDKNA) is disordered. S560 and S564 each carry phosphoserine. Over residues 560-572 (SPSPSQESLNSSK) the composition is skewed to low complexity. WD repeat units follow at residues 604–642 (GHTA…CLCC), 644–684 (QHID…VALW), 689–728 (GQTK…YHTQ), 739–778 (KVGR…LSMK), 783–822 (VNSS…SKFT), and 871–912 (EDAE…KNLS).

As to quaternary structure, interacts with the GTP-bound form of RAB11A when membrane-associated. Interacts with GRAF1/ARHGAP26 or GRAF2/ARHGAP10; the interaction connects the endoplasmic reticulum (ER) with the endosomal tubule. Interacts (via FFAT-like motif) with VAPA (via MSP domain) or VAPB (via MSP domain); the interaction connects the ER with the endosomal tubule. Does not bind to other Rab and Rho small G proteins. Phosphorylated by ATK1; the phosphorylation stabilizes its interaction with RAB11A and RAB11B. As to expression, highly expressed in brain.

Its subcellular location is the cytoplasm. It is found in the cytosol. The protein localises to the perinuclear region. The protein resides in the endosome membrane. It localises to the golgi apparatus. Its subcellular location is the trans-Golgi network. Downstream effector for Rab11 which regulates Rab11 intracellular membrane trafficking functions such as endocytic recycling, intracellular ciliogenesis and protein export. ATK1-mediated phosphorylation of WDR44 induces binding to Rab11 which activates endocytic recycling of transferrin receptor back to the plasma membrane. When bound to Rab11, prevents the formation of the ciliogenic Rab11-Rabin8/RAB3IP-RAB11FIP3 complex, therefore inhibiting preciliary trafficking and ciliogenesis. Participates in neo-synthesized protein export by connecting the endoplasmic reticulum (ER) with the endosomal tubule via direct interactions with the integral ER proteins VAPA or VAPB and the endosomal protein GRAFs (GRAF1/ARHGAP26 or GRAF2/ARHGAP10), which facilitates the transfer of proteins such as E-cadherin, MPP14 and CFTR into a Rab8-Rab10-Rab11-dependent export route. The protein is WD repeat-containing protein 44 (WDR44) of Bos taurus (Bovine).